The chain runs to 129 residues: Follitropin subunit beta (129 aa).

Residues 1–20 (MKSVQFCFLFCCWRAICCRS) form the signal peptide. 6 cysteine pairs are disulfide-bonded: Cys-21–Cys-69, Cys-35–Cys-84, Cys-38–Cys-122, Cys-46–Cys-100, Cys-50–Cys-102, and Cys-105–Cys-112. 2 N-linked (GlcNAc...) asparagine glycosylation sites follow: Asn-25 and Asn-42.

This sequence belongs to the glycoprotein hormones subunit beta family. In terms of assembly, heterodimer. The active follitropin is a heterodimer composed of an alpha chain/CGA shared with other hormones and a unique beta chain/FSHB shown here.

The protein localises to the secreted. Functionally, together with the alpha chain CGA constitutes follitropin, the follicle-stimulating hormone, and provides its biological specificity to the hormone heterodimer. Binds FSHR, a G protein-coupled receptor, on target cells to activate downstream signaling pathways. Follitropin is involved in follicle development and spermatogenesis in reproductive organs. In Bos taurus (Bovine), this protein is Follitropin subunit beta (FSHB).